We begin with the raw amino-acid sequence, 383 residues long: Outer membrane protein Omp-EA (383 aa).

The first 21 residues, 1–21 (MKRNILAVLIPALLAAGAANA), serve as a signal peptide directing secretion. Topologically, residues 22-30 (AEIYNKDGN) are periplasmic. The beta stranded transmembrane segment at 31–45 (KLDLYGKVKAMRYLS) threads the bilayer. Residues 46 to 58 (DADSNASNNADKS) are Extracellular-facing. The chain crosses the membrane as a beta stranded span at residues 59–70 (YTRIGFKGQTLI). Topologically, residues 71–74 (NDQL) are periplasmic. A beta stranded membrane pass occupies residues 75-86 (TGYGQWEYNFSL). The Extracellular segment spans residues 87–100 (SNSESSSDAQSGNK). A beta stranded transmembrane segment spans residues 101 to 109 (TRLGFAGLK). Topologically, residues 110–112 (LKD) are periplasmic. A beta stranded membrane pass occupies residues 113 to 122 (YGSVDYGRNY). Topologically, residues 123–155 (GVIYDVEAFTDMMPEFGATGYTRTDTYMLTRGN) are extracellular. A beta stranded membrane pass occupies residues 156–164 (SMLTWRNSD). Over 165–171 (FFGLVDG) the chain is Periplasmic. The beta stranded transmembrane segment at 172-178 (LKIALQY) threads the bilayer. Residues 179 to 198 (QGKNEGSGTRATNVSNGDGY) lie on the Extracellular side of the membrane. The beta stranded transmembrane segment at 199-206 (GASLSYKI) threads the bilayer. At 207–209 (VEG) the chain is on the periplasmic side. Residues 210 to 219 (LTINGAMSSS) form a beta stranded membrane-spanning segment. Residues 220 to 243 (NRLNANSASSTTSQKMAAYGSGGR) lie on the Extracellular side of the membrane. The beta stranded transmembrane segment at 244–252 (AEAWATGLK) threads the bilayer. The Periplasmic segment spans residues 253–258 (YDANGV). The chain crosses the membrane as a beta stranded span at residues 259 to 268 (YLAGTYAETR). At 269-296 (NTNPFSGASYTFAGNSTATAVSGYANKV) the chain is on the extracellular side. The beta stranded transmembrane segment at 297–307 (QNTELVAQYQF) threads the bilayer. Topologically, residues 308 to 310 (DSG) are periplasmic. Residues 311-319 (LRPSLAYVQ) traverse the membrane as a beta stranded segment. Over 320–335 (TKAKDIENGIGDADLS) the chain is Extracellular. The beta stranded transmembrane segment at 336 to 346 (KFVDVAATYYF) threads the bilayer. Topologically, residues 347 to 351 (NKNMS) are periplasmic. Residues 352–361 (AFVDYKVNLL) form a beta stranded membrane-spanning segment. Topologically, residues 362-372 (SDSNKLHLNTD) are extracellular. The beta stranded transmembrane segment at 373-383 (DIVAVGLVYQF) threads the bilayer.

This sequence belongs to the Gram-negative porin family. In terms of assembly, homotrimer.

It localises to the cell outer membrane. May play an important role in maintaining pathogenicity in plants. The sequence is that of Outer membrane protein Omp-EA (omp-EA) from Erwinia amylovora (Fire blight bacteria).